Consider the following 134-residue polypeptide: MPPKTRSTARRSGRRVVKKNVAQGHAYIKSTFNNTIVSITDPSGAVIAWASSGHVGFKGSRKSTPFAAQLAAENAARKAMDHGMKKVDVFVKGPGSGRETAIRSLQAAGLEVTSISDVTPQPFNGCRPPKRRRV.

Belongs to the universal ribosomal protein uS11 family. In terms of assembly, part of the 30S ribosomal subunit. Interacts with proteins S7 and S18. Binds to IF-3.

Functionally, located on the platform of the 30S subunit, it bridges several disparate RNA helices of the 16S rRNA. Forms part of the Shine-Dalgarno cleft in the 70S ribosome. The sequence is that of Small ribosomal subunit protein uS11 from Corynebacterium diphtheriae (strain ATCC 700971 / NCTC 13129 / Biotype gravis).